A 224-amino-acid polypeptide reads, in one-letter code: MDVMKGTTTVGLICDDAVILATDKRASMGNLVADKEAKKLYKIDDYIALTIAGSVGDAQAIVRLLTAEAKLYKMRTGKNISPLACATLLSNILHSNRYFPFLTQLIIGGYDLLEGAKLFSLDPLGGMNEEKTFTATGSGSPIAYGVLEAGYDRDMPVEEGIKLALKALKSAMERDTYSGNGISLAVITKEGVKIFEDEEIEKILNEITSKSKKKTTKRSRRKSK.

A propeptide spans 1–6 (MDVMKG) (removed in mature form; by autocatalysis). Residue threonine 7 is the Nucleophile of the active site.

This sequence belongs to the peptidase T1B family. In terms of assembly, the 20S proteasome core is composed of 14 alpha and 14 beta subunits that assemble into four stacked heptameric rings, resulting in a barrel-shaped structure. The two inner rings, each composed of seven catalytic beta subunits, are sandwiched by two outer rings, each composed of seven alpha subunits. The catalytic chamber with the active sites is on the inside of the barrel. Has a gated structure, the ends of the cylinder being occluded by the N-termini of the alpha-subunits. Is capped at one or both ends by the proteasome regulatory ATPase, PAN.

The protein localises to the cytoplasm. It carries out the reaction Cleavage of peptide bonds with very broad specificity.. The formation of the proteasomal ATPase PAN-20S proteasome complex, via the docking of the C-termini of PAN into the intersubunit pockets in the alpha-rings, triggers opening of the gate for substrate entry. Interconversion between the open-gate and close-gate conformations leads to a dynamic regulation of the 20S proteasome proteolysis activity. Its function is as follows. Component of the proteasome core, a large protease complex with broad specificity involved in protein degradation. The protein is Proteasome subunit beta of Methanocaldococcus fervens (strain DSM 4213 / JCM 15782 / AG86) (Methanococcus fervens).